Here is a 581-residue protein sequence, read N- to C-terminus: Ezrin (581 aa).

One can recognise an FERM domain in the interval P2–R295. The residue at position 60 (K60) is an N6-acetyllysine. The [IL]-x-C-x-x-[DE] motif signature appears at I115–E120. Y146 carries the post-translational modification Phosphotyrosine; by PDGFR. Residues E244–M581 are interaction with SCYL3. Positions V302–E462 form a coiled coil. Residues K306–M341 are disordered. Positions Q308–M341 are enriched in basic and acidic residues. Phosphotyrosine; by PDGFR is present on Y354. S366 is subject to Phosphoserine. Phosphotyrosine is present on Y476. The segment at S534–Y560 is disordered. Over residues Q535–Y560 the composition is skewed to basic and acidic residues. Phosphothreonine; by ROCK2 and PKC/PRKCI is present on T562.

Interacts with PALS1 and NHERF2. Found in a complex with EZR, PODXL and NHERF2. Interacts with MCC, PLEKHG6, PODXL, SCYL3/PACE1, NHERF1 and TMEM8B. Interacts (when phosphorylated) with FES/FPS. Interacts with dimeric S100P, the interaction may be activating through unmasking of F-actin binding sites. Identified in complexes that contain VIM, EZR, AHNAK, BFSP1, BFSP2, ANK2, PLEC, PRX and spectrin. Detected in a complex composed of at least EZR, AHNAK, PPL and PRX. Interacts with PDPN (via cytoplasmic domain); activates RHOA and promotes epithelial-mesenchymal transition. Interacts with SPN/CD43 cytoplasmic tail, CD44 and ICAM2. Interacts with SLC9A3; interaction targets SLC9A3 to the apical membrane. Interacts with SLC9A1; regulates interactions of SLC9A1 with cytoskeletal and promotes stress fiber formation. Interacts with CLIC5; may work together in a complex which also includes RDX and MYO6 to stabilize linkages between the plasma membrane and subjacent actin cytoskeleton at the base of stereocilia. Phosphorylated by tyrosine-protein kinases. Phosphorylation by ROCK2 suppresses the head-to-tail association of the N-terminal and C-terminal halves resulting in an opened conformation which is capable of actin and membrane-binding. In terms of processing, S-nitrosylation is induced by interferon-gamma and oxidatively-modified low-densitity lipoprotein (LDL(ox)) possibly implicating the iNOS-S100A8/9 transnitrosylase complex. Detected in eye lens fiber cells (at protein level).

The protein localises to the apical cell membrane. Its subcellular location is the cell projection. It is found in the microvillus membrane. The protein resides in the ruffle membrane. It localises to the cytoplasm. The protein localises to the cell cortex. Its subcellular location is the cytoskeleton. It is found in the microvillus. With respect to regulation, a head-to-tail association, of the N-terminal and C-terminal halves results in a closed conformation (inactive form) which is incapable of actin or membrane-binding. In terms of biological role, probably involved in connections of major cytoskeletal structures to the plasma membrane. In epithelial cells, required for the formation of microvilli and membrane ruffles on the apical pole. Along with PLEKHG6, required for normal macropinocytosis. This chain is Ezrin (EZR), found in Bos taurus (Bovine).